The following is a 496-amino-acid chain: Membrane-bound lytic murein transglycosylase F (496 aa).

A signal peptide spans 1–31; the sequence is MPIFSTRVLTYLRCIFRLFIGLTLLLTLVGC. The interval 32–271 is non-LT domain; that stretch reads DFYTPSSQLE…KLDEKYFGHV (240 aa). The tract at residues 273–496 is LT domain; it reads NFDFVDTRTF…AEVVKQITLR (224 aa). Glu-316 is a catalytic residue. The tract at residues 464–486 is disordered; the sequence is HRREELDDDDSSEPPSAERPTVI.

In the N-terminal section; belongs to the bacterial solute-binding protein 3 family. The protein in the C-terminal section; belongs to the transglycosylase Slt family.

The protein localises to the cell outer membrane. It catalyses the reaction Exolytic cleavage of the (1-&gt;4)-beta-glycosidic linkage between N-acetylmuramic acid (MurNAc) and N-acetylglucosamine (GlcNAc) residues in peptidoglycan, from either the reducing or the non-reducing ends of the peptidoglycan chains, with concomitant formation of a 1,6-anhydrobond in the MurNAc residue.. Murein-degrading enzyme that degrades murein glycan strands and insoluble, high-molecular weight murein sacculi, with the concomitant formation of a 1,6-anhydromuramoyl product. Lytic transglycosylases (LTs) play an integral role in the metabolism of the peptidoglycan (PG) sacculus. Their lytic action creates space within the PG sacculus to allow for its expansion as well as for the insertion of various structures such as secretion systems and flagella. This chain is Membrane-bound lytic murein transglycosylase F, found in Aeromonas hydrophila subsp. hydrophila (strain ATCC 7966 / DSM 30187 / BCRC 13018 / CCUG 14551 / JCM 1027 / KCTC 2358 / NCIMB 9240 / NCTC 8049).